The following is a 234-amino-acid chain: Proteasome subunit alpha (234 aa).

This sequence belongs to the peptidase T1A family. As to quaternary structure, the 20S proteasome core is composed of 14 alpha and 14 beta subunits that assemble into four stacked heptameric rings, resulting in a barrel-shaped structure. The two inner rings, each composed of seven catalytic beta subunits, are sandwiched by two outer rings, each composed of seven alpha subunits. The catalytic chamber with the active sites is on the inside of the barrel. Has a gated structure, the ends of the cylinder being occluded by the N-termini of the alpha-subunits. Is capped by the proteasome-associated ATPase, ARC.

It is found in the cytoplasm. Its pathway is protein degradation; proteasomal Pup-dependent pathway. The formation of the proteasomal ATPase ARC-20S proteasome complex, likely via the docking of the C-termini of ARC into the intersubunit pockets in the alpha-rings, may trigger opening of the gate for substrate entry. Interconversion between the open-gate and close-gate conformations leads to a dynamic regulation of the 20S proteasome proteolysis activity. Its function is as follows. Component of the proteasome core, a large protease complex with broad specificity involved in protein degradation. In Acidothermus cellulolyticus (strain ATCC 43068 / DSM 8971 / 11B), this protein is Proteasome subunit alpha.